A 228-amino-acid polypeptide reads, in one-letter code: Cytochrome c oxidase subunit 2 (228 aa).

Residues M1–S14 lie on the Mitochondrial intermembrane side of the membrane. A helical transmembrane segment spans residues P15–M45. Topologically, residues L46 to Q59 are mitochondrial matrix. A helical membrane pass occupies residues E60 to M87. The Mitochondrial intermembrane portion of the chain corresponds to D88–T228. H161, C196, E198, C200, H204, and M207 together coordinate Cu cation. E198 serves as a coordination point for Mg(2+). Y218 is modified (phosphotyrosine).

The protein belongs to the cytochrome c oxidase subunit 2 family. In terms of assembly, component of the cytochrome c oxidase (complex IV, CIV), a multisubunit enzyme composed of 14 subunits. The complex is composed of a catalytic core of 3 subunits MT-CO1, MT-CO2 and MT-CO3, encoded in the mitochondrial DNA, and 11 supernumerary subunits COX4I, COX5A, COX5B, COX6A, COX6B, COX6C, COX7A, COX7B, COX7C, COX8 and NDUFA4, which are encoded in the nuclear genome. The complex exists as a monomer or a dimer and forms supercomplexes (SCs) in the inner mitochondrial membrane with NADH-ubiquinone oxidoreductase (complex I, CI) and ubiquinol-cytochrome c oxidoreductase (cytochrome b-c1 complex, complex III, CIII), resulting in different assemblies (supercomplex SCI(1)III(2)IV(1) and megacomplex MCI(2)III(2)IV(2)). Found in a complex with TMEM177, COA6, COX18, COX20, SCO1 and SCO2. Interacts with TMEM177 in a COX20-dependent manner. Interacts with COX20. Interacts with COX16. The cofactor is Cu cation.

It localises to the mitochondrion inner membrane. It carries out the reaction 4 Fe(II)-[cytochrome c] + O2 + 8 H(+)(in) = 4 Fe(III)-[cytochrome c] + 2 H2O + 4 H(+)(out). Component of the cytochrome c oxidase, the last enzyme in the mitochondrial electron transport chain which drives oxidative phosphorylation. The respiratory chain contains 3 multisubunit complexes succinate dehydrogenase (complex II, CII), ubiquinol-cytochrome c oxidoreductase (cytochrome b-c1 complex, complex III, CIII) and cytochrome c oxidase (complex IV, CIV), that cooperate to transfer electrons derived from NADH and succinate to molecular oxygen, creating an electrochemical gradient over the inner membrane that drives transmembrane transport and the ATP synthase. Cytochrome c oxidase is the component of the respiratory chain that catalyzes the reduction of oxygen to water. Electrons originating from reduced cytochrome c in the intermembrane space (IMS) are transferred via the dinuclear copper A center (CU(A)) of subunit 2 and heme A of subunit 1 to the active site in subunit 1, a binuclear center (BNC) formed by heme A3 and copper B (CU(B)). The BNC reduces molecular oxygen to 2 water molecules using 4 electrons from cytochrome c in the IMS and 4 protons from the mitochondrial matrix. The sequence is that of Cytochrome c oxidase subunit 2 (MT-CO2) from Sus scrofa (Pig).